Reading from the N-terminus, the 97-residue chain is Protein RADIALIS-like 6 (97 aa).

The SANT domain maps to 7 to 59 (SSISPWTFSQNKMFERALAVYDKDTPDRWHNVAKAVGGKTVEEVKRHYDILVE).

As to expression, expressed in the micropylar endosperm surrounding globular-stage embryos but no expression was detected elsewhere, including floral tissues.

The protein resides in the nucleus. Probable transcription factor. This is Protein RADIALIS-like 6 (RL6) from Arabidopsis thaliana (Mouse-ear cress).